The sequence spans 121 residues: Large ribosomal subunit protein uL22 (121 aa).

Belongs to the universal ribosomal protein uL22 family. As to quaternary structure, part of the 50S ribosomal subunit.

This protein binds specifically to 23S rRNA; its binding is stimulated by other ribosomal proteins, e.g. L4, L17, and L20. It is important during the early stages of 50S assembly. It makes multiple contacts with different domains of the 23S rRNA in the assembled 50S subunit and ribosome. In terms of biological role, the globular domain of the protein is located near the polypeptide exit tunnel on the outside of the subunit, while an extended beta-hairpin is found that lines the wall of the exit tunnel in the center of the 70S ribosome. This is Large ribosomal subunit protein uL22 from Hydrogenobaculum sp. (strain Y04AAS1).